Here is a 746-residue protein sequence, read N- to C-terminus: Histone-lysine N-methyltransferase EZH2 (746 aa).

The segment at 1–340 (MGQTGKKSEK…AKEFAAALTA (340 aa)) is interaction with DNMT1, DNMT3A and DNMT3B. Phosphoserine; by PKB/AKT1 is present on Ser21. The interaction with EED stretch occupies residues 39–68 (KSMFSSNRQKILERTEILNQEWKQRRIQPV). The O-linked (GlcNAc) serine glycan is linked to Ser75. Ser76 carries the post-translational modification Phosphoserine. The disordered stretch occupies residues 180–222 (QYNDDDDDDDGDDPEEREEKQKDLEDHRDDKESRPPRKFPSDK). The span at 182 to 195 (NDDDDDDDGDDPEE) shows a compositional bias: acidic residues. Residues 196–222 (REEKQKDLEDHRDDKESRPPRKFPSDK) show a composition bias toward basic and acidic residues. Residues 329-522 (EGAKEFAAAL…SSNHVYNYQP (194 aa)) form an interaction with CDYL region. Thr339 bears the Phosphothreonine mark. The tract at residues 340–426 (AERIKTPPKR…PIKMKPNIEP (87 aa)) is disordered. Phosphothreonine; by CDK1 and CDK2 is present on Thr345. Positions 345–357 (TPPKRPGGRRRGR) are enriched in basic residues. Phosphoserine occurs at positions 363 and 366. Thr367 is subject to Phosphothreonine. The span at 374–385 (ESKDTDSDREAG) shows a compositional bias: basic and acidic residues. Phosphothreonine is present on Thr487. A CXC domain is found at 503-605 (CRKIQLKKDG…SKNVSCKNCS (103 aa)). The SET domain maps to 612–727 (KHLLLAPSDV…TGEELFFDYR (116 aa)). Residue Lys634 forms a Glycyl lysine isopeptide (Lys-Gly) (interchain with G-Cter in SUMO2) linkage.

This sequence belongs to the class V-like SAM-binding methyltransferase superfamily. Histone-lysine methyltransferase family. EZ subfamily. In terms of assembly, component of the PRC2/EED-EZH2 complex, which includes EED, EZH2, SUZ12, RBBP4 and RBBP7 and possibly AEBP2. The minimum components required for methyltransferase activity of the PRC2/EED-EZH2 complex are EED, EZH2 and SUZ12. The PRC2 complex may also interact with DNMT1, DNMT3A, DNMT3B and PHF1 via the EZH2 subunit and with SIRT1 via the SUZ12 subunit. Interacts with HDAC1 and HDAC2. Binds ATRX via the SET domain. Interacts with PRAME. Interacts with CDYL. Interacts with CLOCK, BMAL1 and CRY1. Interacts with DNMT3L; the interaction is direct. Interacts with EZHIP; the interaction blocks EZH2 methyltransferase activity. Interacts with ZNF263; recruited to the SIX3 promoter along with other proteins involved in chromatin modification and transcriptional corepression where it contributes to transcriptional repression. Interacts with ARMC12. Interacts with ZMYND8; the interaction is dependent on the presence of chromatin. Interacts with DDX18; this interaction inhibits the PRC2 complex. Post-translationally, phosphorylated by AKT1. Phosphorylation by AKT1 reduces methyltransferase activity. Phosphorylation at Thr-345 by CDK1 and CDK2 promotes maintenance of H3K27me3 levels at EZH2-target loci, thus leading to epigenetic gene silencing. In terms of processing, sumoylated. Glycosylated: O-GlcNAcylation at Ser-75 by OGT increases stability of EZH2 and facilitates the formation of H3K27me3 by the PRC2/EED-EZH2 complex. In the ovary, expressed in primordial follicles and oocytes and also in external follicle cells (at protein level). Expressed in many tissues. Overexpressed in numerous tumor types including carcinomas of the breast, colon, larynx, lymphoma and testis.

It is found in the nucleus. The enzyme catalyses L-lysyl(27)-[histone H3] + 3 S-adenosyl-L-methionine = N(6),N(6),N(6)-trimethyl-L-lysyl(27)-[histone H3] + 3 S-adenosyl-L-homocysteine + 3 H(+). Polycomb group (PcG) protein. Catalytic subunit of the PRC2/EED-EZH2 complex, which methylates 'Lys-9' (H3K9me) and 'Lys-27' (H3K27me) of histone H3, leading to transcriptional repression of the affected target gene. Able to mono-, di- and trimethylate 'Lys-27' of histone H3 to form H3K27me1, H3K27me2 and H3K27me3, respectively. Displays a preference for substrates with less methylation, loses activity when progressively more methyl groups are incorporated into H3K27, H3K27me0 &gt; H3K27me1 &gt; H3K27me2. Compared to EZH1-containing complexes, it is more abundant in embryonic stem cells and plays a major role in forming H3K27me3, which is required for embryonic stem cell identity and proper differentiation. The PRC2/EED-EZH2 complex may also serve as a recruiting platform for DNA methyltransferases, thereby linking two epigenetic repression systems. Genes repressed by the PRC2/EED-EZH2 complex include HOXC8, HOXA9, MYT1, CDKN2A and retinoic acid target genes. EZH2 can also methylate non-histone proteins such as the transcription factor GATA4 and the nuclear receptor RORA. Regulates the circadian clock via histone methylation at the promoter of the circadian genes. Essential for the CRY1/2-mediated repression of the transcriptional activation of PER1/2 by the CLOCK-BMAL1 heterodimer; involved in the di and trimethylation of 'Lys-27' of histone H3 on PER1/2 promoters which is necessary for the CRY1/2 proteins to inhibit transcription. The sequence is that of Histone-lysine N-methyltransferase EZH2 from Homo sapiens (Human).